We begin with the raw amino-acid sequence, 111 residues long: Ribosome-binding factor A (111 aa).

It belongs to the RbfA family. As to quaternary structure, monomer. Binds 30S ribosomal subunits, but not 50S ribosomal subunits or 70S ribosomes.

The protein resides in the cytoplasm. Its function is as follows. One of several proteins that assist in the late maturation steps of the functional core of the 30S ribosomal subunit. Associates with free 30S ribosomal subunits (but not with 30S subunits that are part of 70S ribosomes or polysomes). Required for efficient processing of 16S rRNA. May interact with the 5'-terminal helix region of 16S rRNA. The polypeptide is Ribosome-binding factor A (Helicobacter acinonychis (strain Sheeba)).